A 514-amino-acid chain; its full sequence is Serine/threonine-protein kinase 33 (514 aa).

A compositionally biased stretch (basic and acidic residues) spans 65–86 (INRDITSRKDLPSRTSNVERKA). The segment at 65-91 (INRDITSRKDLPSRTSNVERKASQQQW) is disordered. Positions 116-381 (YTFGRILGKG…AKELLDNQWL (266 aa)) constitute a Protein kinase domain. Residues 122 to 130 (LGKGSFGIV) and Lys-145 each bind ATP. Asp-238 serves as the catalytic Proton acceptor. Disordered stretches follow at residues 402–468 (KNNP…DMCS) and 485–514 (MEKTPVTPSQGTATKYPAKSGALSRTKKKL). Ser-407 carries the post-translational modification Phosphoserine. Residues 413–426 (TEEKNKPSTEEKLK) are compositionally biased toward basic and acidic residues. Residues 449-468 (STAYEKQFPATSKDNFDMCS) are compositionally biased toward polar residues.

The protein belongs to the protein kinase superfamily. CAMK Ser/Thr protein kinase family. CaMK subfamily. Homodimer. In terms of processing, autophosphorylated. In terms of tissue distribution, highly expressed in testis, fetal lung and heart, followed by pituitary gland, kidney, interventricular septum, pancreas, heart, trachea, thyroid gland and uterus. Weak hybridization signals were observed in the following tissues: amygdala, aorta, esophagus, colon ascending, colon transverse, skeletal muscle, spleen, peripheral blood leukocyte, lymph node, bone marrow, placenta, prostate, liver, salivary gland, mammary gland, some tumor cell lines, fetal brain, fetal liver, fetal spleen and fetal thymus. No signal at all was detectable in RNA from tissues of the nervous system.

It is found in the cytoplasm. Its subcellular location is the cytoskeleton. The protein resides in the perinuclear region. It carries out the reaction L-seryl-[protein] + ATP = O-phospho-L-seryl-[protein] + ADP + H(+). The catalysed reaction is L-threonyl-[protein] + ATP = O-phospho-L-threonyl-[protein] + ADP + H(+). Specifically inhibited by CDD-2807 ((3-([1,1'-Biphenyl]-2-ylethynyl)-1H-indazol-5-yl)(2,6-diazaspiro[3.5]nonan-2-yl)methanone). Its function is as follows. Serine/threonine protein kinase required for spermatid differentiation and male fertility. Promotes sperm flagella assembly during spermatogenesis by mediating phosphorylation of fibrous sheath proteins AKAP3 and AKAP4. Also phosphorylates vimentin/VIM, thereby regulating the dynamic behavior of the intermediate filament cytoskeleton. In Homo sapiens (Human), this protein is Serine/threonine-protein kinase 33.